The primary structure comprises 433 residues: L-lysine 2,3-aminomutase (433 aa).

The region spanning 122–334 is the Radical SAM core domain; the sequence is HRYPDRVLFY…SLIGHTTGFA (213 aa). Cysteine 136, cysteine 140, and cysteine 143 together coordinate [4Fe-4S] cluster. Cysteine 279 contacts Zn(2+). Lysine 348 is subject to N6-(pyridoxal phosphate)lysine. The Zn(2+) site is built by cysteine 389, cysteine 392, and cysteine 396.

The protein belongs to the radical SAM superfamily. KamA family. It depends on [4Fe-4S] cluster as a cofactor. Pyridoxal 5'-phosphate serves as cofactor. The cofactor is Zn(2+).

It catalyses the reaction L-lysine = (3S)-3,6-diaminohexanoate. Its function is as follows. Catalyzes the interconversion of L-alpha-lysine and L-beta-lysine. Is involved in the biosynthesis pathway of N6-acetyl-beta-lysine, a compatible solute produced by methanogenic archaea that helps cells to cope with salt stress. This Methanococcus maripaludis (strain DSM 14266 / JCM 13030 / NBRC 101832 / S2 / LL) protein is L-lysine 2,3-aminomutase (ablA).